The primary structure comprises 318 residues: Cytochrome f (318 aa).

The first 34 residues, 1 to 34 (MKNNYLANLIKTLQAIVVSVALLAPLVLPSAVNA), serve as a signal peptide directing secretion. Heme contacts are provided by Phe35, Cys55, Cys58, and His59. Residues 284-304 (VKGLIAFFFTVILAQILLVLK) traverse the membrane as a helical segment.

Belongs to the cytochrome f family. As to quaternary structure, the 4 large subunits of the cytochrome b6-f complex are cytochrome b6, subunit IV (17 kDa polypeptide, petD), cytochrome f and the Rieske protein, while the 4 small subunits are PetG, PetL, PetM and PetN. The complex functions as a dimer. Heme is required as a cofactor.

The protein localises to the plastid. It localises to the chloroplast thylakoid membrane. Functionally, component of the cytochrome b6-f complex, which mediates electron transfer between photosystem II (PSII) and photosystem I (PSI), cyclic electron flow around PSI, and state transitions. This Rhodomonas salina (Cryptomonas salina) protein is Cytochrome f.